A 497-amino-acid chain; its full sequence is E3 ubiquitin-protein ligase CBL-C (497 aa).

The tract at residues 7-145 (PQGWQWGEPR…SALFPEGKYC (139 aa)) is 4H. Residues 7-321 (PQGWQWGEPR…GKNHNPDLTE (315 aa)) enclose the Cbl-PTB domain. The segment at 146 to 218 (GHLYQITKGS…FEFDIFTRLF (73 aa)) is EF-hand-like. D199, T201, and E210 together coordinate Ca(2+). An SH2-like region spans residues 219-321 (QPWPTLLKNW…GKNHNPDLTE (103 aa)). R264 contacts 4-O-phospho-L-tyrosine. Positions 322-350 (LCRAVLNQCIQVSQEQLQLYQAMNSTFEL) are linker. At Y341 the chain carries Phosphotyrosine; by SRC. The segment at 351–390 (CKICTERDKDVRIEPCGHLLCSCCLAAWQHSDSQTCPFCR) adopts an RING-type zinc-finger fold. The tract at residues 351 to 497 (CKICTERDKD…QVREGATESS (147 aa)) is interaction with RET.

Interacts with Ubiquitin-conjugating enzyme E2 UBE2D2 and UBE2D3. Interacts with EGFR (tyrosine phosphorylated). Interacts with the SH3 domain proteins LYN and CRK. Interacts (via RING-type zinc finger) with TGFB1I1 (via LIM zinc-binding domain 2); the interaction is direct and enhances the E3 activity. Interacts directly with RET (inactive) and CD2AP; dissociates from RET upon RET activation by GDNF which also increases the interaction with CD2AP suggesting dissociation as CBLC:CD2AP complex. Interacts with SRC; the interaction is enhanced when SRC is phosphorylated at 'Tyr-419'. In terms of processing, phosphorylated on multiple tyrosine residues by SRC. Post-translationally, autoubiquitinated, when phosphorylated at Tyr-341.

It carries out the reaction S-ubiquitinyl-[E2 ubiquitin-conjugating enzyme]-L-cysteine + [acceptor protein]-L-lysine = [E2 ubiquitin-conjugating enzyme]-L-cysteine + N(6)-ubiquitinyl-[acceptor protein]-L-lysine.. Phosphorylation at Tyr-341 is necessary and sufficient for the activation of E3 activity. In terms of biological role, acts as an E3 ubiquitin-protein ligase, which accepts ubiquitin from specific E2 ubiquitin-conjugating enzymes, and then transfers it to substrates promoting their degradation by the proteasome. Functionally coupled with the E2 ubiquitin-protein ligases UB2D1, UB2D2 and UB2D3. Regulator of EGFR mediated signal transduction; upon EGF activation, ubiquitinates EGFR. Inhibits EGF stimulated MAPK1 activation. Promotes ubiquitination of SRC phosphorylated at 'Tyr-419', has the highest ubiquitin ligase activity among CBL family proteins. In collaboration with CD2AP may act as regulatory checkpoint for Ret signaling by modulating the rate of RET degradation after ligand activation; CD2AP converts it from an inhibitor to a promoter of RET degradation; the function limits the potency of GDNF on neuronal survival. The polypeptide is E3 ubiquitin-protein ligase CBL-C (Cblc) (Rattus norvegicus (Rat)).